The sequence spans 358 residues: tRNA-specific 2-thiouridylase MnmA (358 aa).

ATP is bound by residues 7 to 14 (AMSGGVDS) and M33. C102 functions as the Nucleophile in the catalytic mechanism. A disulfide bridge connects residues C102 and C199. G126 lines the ATP pocket. The segment at 149–151 (KDQ) is interaction with tRNA. C199 functions as the Cysteine persulfide intermediate in the catalytic mechanism. The interaction with tRNA stretch occupies residues 305–306 (RY).

It belongs to the MnmA/TRMU family.

It is found in the cytoplasm. It catalyses the reaction S-sulfanyl-L-cysteinyl-[protein] + uridine(34) in tRNA + AH2 + ATP = 2-thiouridine(34) in tRNA + L-cysteinyl-[protein] + A + AMP + diphosphate + H(+). Its function is as follows. Catalyzes the 2-thiolation of uridine at the wobble position (U34) of tRNA, leading to the formation of s(2)U34. In Halothermothrix orenii (strain H 168 / OCM 544 / DSM 9562), this protein is tRNA-specific 2-thiouridylase MnmA.